A 342-amino-acid chain; its full sequence is Ferrochelatase (342 aa).

Fe cation is bound by residues His188 and Glu268.

It belongs to the ferrochelatase family.

The protein localises to the cytoplasm. It catalyses the reaction heme b + 2 H(+) = protoporphyrin IX + Fe(2+). Its pathway is porphyrin-containing compound metabolism; protoheme biosynthesis; protoheme from protoporphyrin-IX: step 1/1. Its function is as follows. Catalyzes the ferrous insertion into protoporphyrin IX. The sequence is that of Ferrochelatase from Rickettsia prowazekii (strain Madrid E).